The chain runs to 95 residues: Co-chaperonin GroES (95 aa).

Belongs to the GroES chaperonin family. As to quaternary structure, heptamer of 7 subunits arranged in a ring. Interacts with the chaperonin GroEL.

It localises to the cytoplasm. Together with the chaperonin GroEL, plays an essential role in assisting protein folding. The GroEL-GroES system forms a nano-cage that allows encapsulation of the non-native substrate proteins and provides a physical environment optimized to promote and accelerate protein folding. GroES binds to the apical surface of the GroEL ring, thereby capping the opening of the GroEL channel. This chain is Co-chaperonin GroES, found in Aliivibrio salmonicida (strain LFI1238) (Vibrio salmonicida (strain LFI1238)).